A 955-amino-acid chain; its full sequence is METLLSALATLYANTDREQKLQANNYLEEFQKSPAAWQICFSILNQDDSSIEAKLFAAQTLRQKIVYDFHQLPKETHIEFRNSLLQLFLAAKDSPRPLLVSLAVCMAAIALHMTEWHNVIADVFQACSSKDPSGRCVLQFLSVLPEEASDPRKTSLSWEELCIRVDELLRDNGPAVLELLVQYVDAVRASGSPSSADLGLVLTSLISWLREIPLDKVMASPLIELAFRSLDDDLLLEDAVEFLCALFNETKDVDETTDAILMLYPRLLELQPKLIAACDDPETFRALGRLFAEAGEAWVVLIARMPNDFLPLVNCIAQVAANDTELEAIKFTFAFWWDLKQMVELDVYAEARQLFAPIYLELVRIIVRHLHYPRTEDLAINEQMASNEVLFEDRDAEDRFRSFRHEMGDVLKDCCVVAGVSSCLVQISSQLIKVLKIKESGLPYYWQDVEAPLFALRAIGRMVPANEDQVIGSLFQILPQLPENNKVRYAATLFLGRYTEWTAQHSEFLELQLNYISAGFEVANKEVQSAAAQALKHFCYDCREQLVGHLSQLHMFYLNAKTYLAPDPLMEVAQGLAHIVDIQPVANVYQSVHSFLAPSLQSILLAQVKLNPTQAELEALADNIDIVTIFLSLVHPPSPAGELHPIVRLFQDIWPILSRTLDTFSDVLICERISKLLKNFIYTFKEKAIVTLPVITEALIKGFEKTQYGCFLWVSGACVRQFGVPEMDEQTLSAVWSFVGKQCTNMFYYMSNKNPKEIPDVIDDFFRLMMDALLANPQMVLESQMLESLIQAAMMSLQLEQQEPLQTVLNFLQDLLAFALHTPPYSLIEPLPDSLLKSLADLLLKNSQELYIILFNGMVFTFPRDNISDASAVLIPLIRLVFAADPSLCIKYMSNVLDQLPAMTIGQEEREKFLANFSKHCTSSEMPRLRAHLQDWTAMYRRRVLTPRAKLISDD.

In terms of domain architecture, Importin N-terminal spans 23–90 (ANNYLEEFQK…RNSLLQLFLA (68 aa)).

This is an uncharacterized protein from Schizosaccharomyces pombe (strain 972 / ATCC 24843) (Fission yeast).